Reading from the N-terminus, the 343-residue chain is Small ribosomal subunit biogenesis GTPase RsgA (343 aa).

Residues 116–275 (RGQLKPVAAN…LIDSPGIREF (160 aa)) form the CP-type G domain. Residues 163 to 166 (NKAD) and 217 to 225 (GQSGVGKSS) contribute to the GTP site. The Zn(2+) site is built by Cys-299, Cys-304, His-306, and Cys-312.

It belongs to the TRAFAC class YlqF/YawG GTPase family. RsgA subfamily. In terms of assembly, monomer. Associates with 30S ribosomal subunit, binds 16S rRNA. Requires Zn(2+) as cofactor.

The protein localises to the cytoplasm. One of several proteins that assist in the late maturation steps of the functional core of the 30S ribosomal subunit. Helps release RbfA from mature subunits. May play a role in the assembly of ribosomal proteins into the subunit. Circularly permuted GTPase that catalyzes slow GTP hydrolysis, GTPase activity is stimulated by the 30S ribosomal subunit. This Pseudomonas fluorescens (strain ATCC BAA-477 / NRRL B-23932 / Pf-5) protein is Small ribosomal subunit biogenesis GTPase RsgA.